Consider the following 413-residue polypeptide: Ribosomal RNA large subunit methyltransferase G (413 aa).

The segment at 389 to 413 (EAEVEQAFDTETPHPQSALYGKPKA) is disordered.

This sequence belongs to the methyltransferase superfamily. RlmG family.

It is found in the cytoplasm. The catalysed reaction is guanosine(1835) in 23S rRNA + S-adenosyl-L-methionine = N(2)-methylguanosine(1835) in 23S rRNA + S-adenosyl-L-homocysteine + H(+). In terms of biological role, specifically methylates the guanine in position 1835 (m2G1835) of 23S rRNA. In Shewanella pealeana (strain ATCC 700345 / ANG-SQ1), this protein is Ribosomal RNA large subunit methyltransferase G.